Reading from the N-terminus, the 402-residue chain is Imidazolonepropionase (402 aa).

Residues histidine 69 and histidine 71 each coordinate Fe(3+). Positions 69 and 71 each coordinate Zn(2+). 4-imidazolone-5-propanoate contacts are provided by arginine 78, tyrosine 141, and histidine 174. Tyrosine 141 contacts N-formimidoyl-L-glutamate. A Fe(3+)-binding site is contributed by histidine 239. Position 239 (histidine 239) interacts with Zn(2+). Glutamine 242 contributes to the 4-imidazolone-5-propanoate binding site. Aspartate 314 is a binding site for Fe(3+). Aspartate 314 is a binding site for Zn(2+). Positions 316 and 318 each coordinate N-formimidoyl-L-glutamate. Position 319 (threonine 319) interacts with 4-imidazolone-5-propanoate.

This sequence belongs to the metallo-dependent hydrolases superfamily. HutI family. Zn(2+) serves as cofactor. Requires Fe(3+) as cofactor.

It is found in the cytoplasm. It carries out the reaction 4-imidazolone-5-propanoate + H2O = N-formimidoyl-L-glutamate. The protein operates within amino-acid degradation; L-histidine degradation into L-glutamate; N-formimidoyl-L-glutamate from L-histidine: step 3/3. Functionally, catalyzes the hydrolytic cleavage of the carbon-nitrogen bond in imidazolone-5-propanoate to yield N-formimidoyl-L-glutamate. It is the third step in the universal histidine degradation pathway. In Maricaulis maris (strain MCS10) (Caulobacter maris), this protein is Imidazolonepropionase.